The sequence spans 211 residues: Guanylate kinase (211 aa).

A Guanylate kinase-like domain is found at 5–184 (GLLIVFSGPS…AAERVKRIIE (180 aa)). Residue 12–19 (GPSGVGKG) participates in ATP binding.

It belongs to the guanylate kinase family.

It localises to the cytoplasm. It carries out the reaction GMP + ATP = GDP + ADP. In terms of biological role, essential for recycling GMP and indirectly, cGMP. This is Guanylate kinase from Streptococcus pyogenes serotype M1.